The primary structure comprises 380 residues: Erythronate-4-phosphate dehydrogenase (380 aa).

Substrate is bound by residues serine 45 and threonine 66. NAD(+) contacts are provided by aspartate 146 and threonine 174. Residue arginine 207 is part of the active site. Aspartate 231 provides a ligand contact to NAD(+). Glutamate 236 is a catalytic residue. Histidine 253 serves as the catalytic Proton donor. Glycine 256 is an NAD(+) binding site. Tyrosine 257 is a substrate binding site.

It belongs to the D-isomer specific 2-hydroxyacid dehydrogenase family. PdxB subfamily. In terms of assembly, homodimer.

Its subcellular location is the cytoplasm. It carries out the reaction 4-phospho-D-erythronate + NAD(+) = (R)-3-hydroxy-2-oxo-4-phosphooxybutanoate + NADH + H(+). It participates in cofactor biosynthesis; pyridoxine 5'-phosphate biosynthesis; pyridoxine 5'-phosphate from D-erythrose 4-phosphate: step 2/5. Functionally, catalyzes the oxidation of erythronate-4-phosphate to 3-hydroxy-2-oxo-4-phosphonooxybutanoate. The polypeptide is Erythronate-4-phosphate dehydrogenase (Pseudomonas fluorescens (strain Pf0-1)).